The following is a 337-amino-acid chain: Ketol-acid reductoisomerase (NADP(+)) (337 aa).

Residues 3–183 (VEVFYDDDAD…GGTRAGVIKT (181 aa)) enclose the KARI N-terminal Rossmann domain. NADP(+)-binding positions include 26–29 (YGSQ), S52, S54, and 84–87 (DTAQ). H109 is an active-site residue. G135 is an NADP(+) binding site. In terms of domain architecture, KARI C-terminal knotted spans 184–329 (TFTEETETDL…GRLRAMMSWV (146 aa)). The Mg(2+) site is built by D192, E196, E228, and E232. S253 contacts substrate.

The protein belongs to the ketol-acid reductoisomerase family. Mg(2+) serves as cofactor.

The catalysed reaction is (2R)-2,3-dihydroxy-3-methylbutanoate + NADP(+) = (2S)-2-acetolactate + NADPH + H(+). The enzyme catalyses (2R,3R)-2,3-dihydroxy-3-methylpentanoate + NADP(+) = (S)-2-ethyl-2-hydroxy-3-oxobutanoate + NADPH + H(+). Its pathway is amino-acid biosynthesis; L-isoleucine biosynthesis; L-isoleucine from 2-oxobutanoate: step 2/4. It functions in the pathway amino-acid biosynthesis; L-valine biosynthesis; L-valine from pyruvate: step 2/4. Functionally, involved in the biosynthesis of branched-chain amino acids (BCAA). Catalyzes an alkyl-migration followed by a ketol-acid reduction of (S)-2-acetolactate (S2AL) to yield (R)-2,3-dihydroxy-isovalerate. In the isomerase reaction, S2AL is rearranged via a Mg-dependent methyl migration to produce 3-hydroxy-3-methyl-2-ketobutyrate (HMKB). In the reductase reaction, this 2-ketoacid undergoes a metal-dependent reduction by NADPH to yield (R)-2,3-dihydroxy-isovalerate. The protein is Ketol-acid reductoisomerase (NADP(+)) of Salinispora tropica (strain ATCC BAA-916 / DSM 44818 / JCM 13857 / NBRC 105044 / CNB-440).